A 213-amino-acid polypeptide reads, in one-letter code: Heavy metal-binding protein HIP (213 aa).

The C1q domain occupies 80 to 213 (FKSHHVAFSA…MSTFTGFMLH (134 aa)).

Pallium, gill and liver.

The protein localises to the secreted. Binds heavy metals. May function as a carrier of divalent cations in plasma. In Mytilus edulis (Blue mussel), this protein is Heavy metal-binding protein HIP.